A 516-amino-acid chain; its full sequence is Maintenance of mitochondrial morphology protein 1 (516 aa).

The Lumenal segment spans residues 1 to 43 (MAGSTSASLQTPYFPSSTQINPVRVDHTLPLPPAQPSLSFTQG). The chain crosses the membrane as a helical span at residues 44 to 64 (LLVGQLSVVLLIGAFIKFFIF). At 65-516 (GEAPPPPSRG…GSMPDTVTET (452 aa)) the chain is on the cytoplasmic side. Disordered regions lie at residues 70–118 (PPSR…SSST), 295–349 (TSDQ…SKHG), 420–466 (RTGL…IDRG), and 485–516 (GGHQ…VTET). 3 stretches are compositionally biased toward polar residues: residues 74–96 (GLSN…TDSS), 105–118 (STSN…SSST), and 295–312 (TSDQ…TTSE). The 262-residue stretch at 151–412 (QPESLDWFNV…EPRVQVVGLP (262 aa)) folds into the SMP-LTD domain. The segment covering 449 to 460 (GVSGGGGGGGSM) has biased composition (gly residues).

The protein belongs to the MMM1 family. Homodimer. Component of the ER-mitochondria encounter structure (ERMES) or MDM complex, composed of MMM1, MDM10, MDM12 and MDM34. An MMM1 homodimer associates with one molecule of MDM12 on each side in a pairwise head-to-tail manner, and the SMP-LTD domains of MMM1 and MDM12 generate a continuous hydrophobic tunnel for phospholipid trafficking.

The protein resides in the endoplasmic reticulum membrane. Functionally, component of the ERMES/MDM complex, which serves as a molecular tether to connect the endoplasmic reticulum (ER) and mitochondria. Components of this complex are involved in the control of mitochondrial shape and protein biogenesis, and function in nonvesicular lipid trafficking between the ER and mitochondria. The MDM12-MMM1 subcomplex functions in the major beta-barrel assembly pathway that is responsible for biogenesis of all outer membrane beta-barrel proteins, and acts in a late step after the SAM complex. The MDM10-MDM12-MMM1 subcomplex further acts in the TOM40-specific pathway after the action of the MDM12-MMM1 complex. Essential for establishing and maintaining the structure of mitochondria and maintenance of mtDNA nucleoids. In Paracoccidioides brasiliensis (strain Pb18), this protein is Maintenance of mitochondrial morphology protein 1.